We begin with the raw amino-acid sequence, 452 residues long: Ketoisovalerate reductase BEA2 (452 aa).

Residue Gly-70–Gly-75 coordinates NADP(+). The Proton donor role is filled by Lys-285. Residues Asn-289, Asn-293, and Ser-393 each coordinate substrate. Glu-405 is an NADP(+) binding site.

The protein belongs to the ketopantoate reductase family.

It carries out the reaction (R)-2-hydroxy-3-methylbutanoate + NADP(+) = 3-methyl-2-oxobutanoate + NADPH + H(+). In terms of biological role, ketoisovalerate reductase; part of the gene cluster that mediates the biosynthesis of beauvericin (BEA), a non-ribosomal cyclic hexadepsipeptide that shows antibiotic, antifungal, insecticidal, and cancer cell antiproliferative and antihaptotactic activity. Ketoisovalerate reductase BEA2 catalyzes the NADPH-specific reduction of ketoisovaleric acid to hydroxyisovalerate, a precursor for beauvericin biosynthesis. The nonribosomal cyclodepsipeptide synthetase BEA1 then catalyzes the formation of beauvericin via condensation and cyclization of 3 dipeptidol monomers, each composed of one unit of hydroxyisovalerate and one unit of N-methyl-phenylalanine. This is Ketoisovalerate reductase BEA2 from Gibberella fujikuroi (strain CBS 195.34 / IMI 58289 / NRRL A-6831) (Bakanae and foot rot disease fungus).